The chain runs to 393 residues: Ribonuclease D (393 aa).

The region spanning 14-181 (LITTTEDLTG…VYQLLLERLE (168 aa)) is the 3'-5' exonuclease domain. An HRDC domain is found at 219 to 300 (NRRMLGVLRA…AAARALPDGA (82 aa)).

It belongs to the RNase D family. Requires a divalent metal cation as cofactor.

Its subcellular location is the cytoplasm. It carries out the reaction Exonucleolytic cleavage that removes extra residues from the 3'-terminus of tRNA to produce 5'-mononucleotides.. Functionally, exonuclease involved in the 3' processing of various precursor tRNAs. Initiates hydrolysis at the 3'-terminus of an RNA molecule and releases 5'-mononucleotides. The polypeptide is Ribonuclease D (Gluconacetobacter diazotrophicus (strain ATCC 49037 / DSM 5601 / CCUG 37298 / CIP 103539 / LMG 7603 / PAl5)).